Consider the following 564-residue polypeptide: Phenylalanine--tRNA ligase beta subunit (564 aa).

Residues 286–362 enclose the B5 domain; that stretch reads YFQNSLKINV…IGKGLDNFKS (77 aa). Positions 340, 346, 349, and 350 each coordinate Mg(2+).

It belongs to the phenylalanyl-tRNA synthetase beta subunit family. Type 2 subfamily. In terms of assembly, tetramer of two alpha and two beta subunits. Mg(2+) serves as cofactor.

It is found in the cytoplasm. The enzyme catalyses tRNA(Phe) + L-phenylalanine + ATP = L-phenylalanyl-tRNA(Phe) + AMP + diphosphate + H(+). This is Phenylalanine--tRNA ligase beta subunit from Borrelia recurrentis (strain A1).